A 598-amino-acid chain; its full sequence is Probable ATP-dependent RNA helicase DDX52 (598 aa).

At Lys-15 the chain carries N6-acetyllysine. Ser-39 carries the phosphoserine modification. The tract at residues 59-98 (CGGLQTQQELQNEETTEGGLLERSKEPKKKKRKKMTADVP) is disordered. The short motif at 166–194 (QLDQEYKISPRLLQNILDAGFQVPTPIQM) is the Q motif element. The Helicase ATP-binding domain maps to 197–375 (IPVMLHGREL…KLNLDNIVSV (179 aa)). 210-217 (APTGSGKT) contributes to the ATP binding site. Positions 319–322 (DESD) match the DEAD box motif. Residues 386-547 (TVEQELLFVG…PVPEYIKGFQ (162 aa)) enclose the Helicase C-terminal domain. The segment at 578-598 (AKQKKVAGQNSKKKETLKGKS) is disordered. The segment covering 589 to 598 (KKKETLKGKS) has biased composition (basic and acidic residues).

This sequence belongs to the DEAD box helicase family. DDX52/ROK1 subfamily.

Its subcellular location is the nucleus. It localises to the nucleolus. The enzyme catalyses ATP + H2O = ADP + phosphate + H(+). Its function is as follows. Required for efficient ribosome biogenesis. May control cell cycle progression by regulating translation of mRNAs that contain a terminal oligo pyrimidine (TOP) motif in their 5' UTRs, such as GTPBP4. The sequence is that of Probable ATP-dependent RNA helicase DDX52 (Ddx52) from Rattus norvegicus (Rat).